We begin with the raw amino-acid sequence, 1423 residues long: DNA-directed RNA polymerase subunit beta' (1423 aa).

Zn(2+)-binding residues include cysteine 71, cysteine 73, cysteine 86, and cysteine 89. Positions 461, 463, and 465 each coordinate Mg(2+). Cysteine 815, cysteine 889, cysteine 896, and cysteine 899 together coordinate Zn(2+).

It belongs to the RNA polymerase beta' chain family. As to quaternary structure, the RNAP catalytic core consists of 2 alpha, 1 beta, 1 beta' and 1 omega subunit. When a sigma factor is associated with the core the holoenzyme is formed, which can initiate transcription. Mg(2+) serves as cofactor. Zn(2+) is required as a cofactor.

It carries out the reaction RNA(n) + a ribonucleoside 5'-triphosphate = RNA(n+1) + diphosphate. Its function is as follows. DNA-dependent RNA polymerase catalyzes the transcription of DNA into RNA using the four ribonucleoside triphosphates as substrates. The protein is DNA-directed RNA polymerase subunit beta' of Actinobacillus pleuropneumoniae serotype 7 (strain AP76).